A 71-amino-acid polypeptide reads, in one-letter code: Keratin-associated protein 6-1 (71 aa).

Belongs to the KRTAP type 6 family. Interacts with hair keratins.

Its function is as follows. In the hair cortex, hair keratin intermediate filaments are embedded in an interfilamentous matrix, consisting of hair keratin-associated proteins (KRTAP), which are essential for the formation of a rigid and resistant hair shaft through their extensive disulfide bond cross-linking with abundant cysteine residues of hair keratins. The matrix proteins include the high-sulfur and high-glycine-tyrosine keratins. This chain is Keratin-associated protein 6-1 (KRTAP6-1), found in Homo sapiens (Human).